The following is a 138-amino-acid chain: Small ribosomal subunit protein bS6 (138 aa).

The segment at 94 to 138 (VKQDGPLPTPKPTSKEDETEKEEVKPTEDKTESPAQEEKKEDSKE) is disordered. Residues 106–138 (TSKEDETEKEEVKPTEDKTESPAQEEKKEDSKE) show a composition bias toward basic and acidic residues.

The protein belongs to the bacterial ribosomal protein bS6 family.

In terms of biological role, binds together with bS18 to 16S ribosomal RNA. The polypeptide is Small ribosomal subunit protein bS6 (Prochlorococcus marinus (strain NATL1A)).